Consider the following 325-residue polypeptide: ATP phosphoribosyltransferase (325 aa).

It belongs to the ATP phosphoribosyltransferase family. Long subfamily. It depends on Mg(2+) as a cofactor.

The protein resides in the cytoplasm. It catalyses the reaction 1-(5-phospho-beta-D-ribosyl)-ATP + diphosphate = 5-phospho-alpha-D-ribose 1-diphosphate + ATP. The protein operates within amino-acid biosynthesis; L-histidine biosynthesis; L-histidine from 5-phospho-alpha-D-ribose 1-diphosphate: step 1/9. Its activity is regulated as follows. Feedback inhibited by histidine. In terms of biological role, catalyzes the condensation of ATP and 5-phosphoribose 1-diphosphate to form N'-(5'-phosphoribosyl)-ATP (PR-ATP). Has a crucial role in the pathway because the rate of histidine biosynthesis seems to be controlled primarily by regulation of HisG enzymatic activity. The sequence is that of ATP phosphoribosyltransferase from Afipia carboxidovorans (strain ATCC 49405 / DSM 1227 / KCTC 32145 / OM5) (Oligotropha carboxidovorans).